The following is a 505-amino-acid chain: Protein disulfide-isomerase A3 (505 aa).

The signal sequence occupies residues 1–24 (MRLRRLALFPGVALLLAAARLAAA). The region spanning 25–133 (SDVLELTDDN…IVSHLKKQAG (109 aa)) is the Thioredoxin 1 domain. Catalysis depends on nucleophile residues Cys57 and Cys60. Residues Cys57 and Cys60 are joined by a disulfide bond. Residue Lys61 is modified to N6-methyllysine. Cys85 and Cys92 are oxidised to a cystine. Lys129 carries the N6-succinyllysine modification. Lys152 carries the post-translational modification N6-acetyllysine. Position 218 is an N6-succinyllysine (Lys218). Lys252 bears the N6-acetyllysine mark. The residue at position 319 (Thr319) is a Phosphothreonine. The Thioredoxin 2 domain maps to 343–485 (SRDGKALERF…FISYLQREAT (143 aa)). Lys362 carries the post-translational modification N6-acetyllysine. Catalysis depends on nucleophile residues Cys406 and Cys409. Cys406 and Cys409 are joined by a disulfide. A disordered region spans residues 484-505 (ATNPPVIQEEKPKKKKKAQEDL). Residues 491–505 (QEEKPKKKKKAQEDL) show a composition bias toward basic and acidic residues. The residue at position 494 (Lys494) is an N6-acetyllysine. Positions 502-505 (QEDL) match the Prevents secretion from ER motif.

As to quaternary structure, part of the major histocompatibility complex class I (MHC I) peptide loading complex composed of TAP1, TAP2, B2M, MHC heavy chain, TAPBP, PDIA3, and CALR. Interacts with ERP27 and CANX. Interacts with SERPINA2 and with the S and Z variants of SERPINA1. Interacts with ATP2A2. Within the major histocompatibility complex class I (MHC I) peptide loading complex forms reversible disulfide-linked heterodimers with TAPBP as part of its protein folding chaperone activity. This is essential to assist the dynamic assembly of the MHC I complex with high affinity antigens in the endoplasmic reticulum. Post-translationally, phosphorylated. Detected in the flagellum and head region of spermatozoa (at protein level). Expressed in liver, stomach and colon (at protein level). Expressed in gastric parietal cells and chief cells (at protein level).

Its subcellular location is the endoplasmic reticulum. It localises to the endoplasmic reticulum lumen. The protein resides in the melanosome. It carries out the reaction Catalyzes the rearrangement of -S-S- bonds in proteins.. Its activity is regulated as follows. Association with calcitriol does not affect its enzymatic activity. Protein disulfide isomerase that catalyzes the formation, isomerization, and reduction or oxidation of disulfide bonds in client proteins and functions as a protein folding chaperone. Core component of the major histocompatibility complex class I (MHC I) peptide loading complex where it functions as an essential folding chaperone for TAPBP. Through TAPBP, assists the dynamic assembly of the MHC I complex with high affinity antigens in the endoplasmic reticulum. Therefore, plays a crucial role in the presentation of antigens to cytotoxic T cells in adaptive immunity. This chain is Protein disulfide-isomerase A3, found in Homo sapiens (Human).